Here is a 122-residue protein sequence, read N- to C-terminus: Large ribosomal subunit protein uL14 (122 aa).

This sequence belongs to the universal ribosomal protein uL14 family. Part of the 50S ribosomal subunit. Forms a cluster with proteins L3 and L19. In the 70S ribosome, L14 and L19 interact and together make contacts with the 16S rRNA in bridges B5 and B8.

In terms of biological role, binds to 23S rRNA. Forms part of two intersubunit bridges in the 70S ribosome. The sequence is that of Large ribosomal subunit protein uL14 from Borrelia recurrentis (strain A1).